Consider the following 374-residue polypeptide: Protein A6 homolog (374 aa).

It belongs to the chordopoxvirinae A6 family.

It is found in the virion. In terms of biological role, plays an essential role in immature virion (IV) to mature virion (MV) transition. In Vertebrata (FPV), this protein is Protein A6 homolog.